A 356-amino-acid chain; its full sequence is MRVTDFSFELPESLIAHYPQPERSRCRLLSLEGPTGALTHGTFTDLLDKLNPGDVLVFNNTRVIPARLFGRKASGGKIEVLVERMLDDKRILAHIRASKAPKPGTELLLGDDENIHATMTARHGALFEVEFNDERPVLDILNAIGHMPLPPYIDRPDEDADRELYQTVYSEKPGAVAAPTAGLHFDKPLLAALREKGIEMAFVTLHVGAGTFQPVRVDTIEDHIMHSEYAEVPQEVVDAVLAAKARGNRVIAVGTTSVRSLESAAQAAKSDLIEPFFGDTQIFIYPGYQYKVIDALVTNFHLPESTLIMLVSAFAGYEHTMNAYKAAVEQKYRFFSYGDAMFITYNPQAIFERVGE.

This sequence belongs to the QueA family. Monomer.

It is found in the cytoplasm. It catalyses the reaction 7-aminomethyl-7-carbaguanosine(34) in tRNA + S-adenosyl-L-methionine = epoxyqueuosine(34) in tRNA + adenine + L-methionine + 2 H(+). It participates in tRNA modification; tRNA-queuosine biosynthesis. Its function is as follows. Transfers and isomerizes the ribose moiety from AdoMet to the 7-aminomethyl group of 7-deazaguanine (preQ1-tRNA) to give epoxyqueuosine (oQ-tRNA). This is S-adenosylmethionine:tRNA ribosyltransferase-isomerase from Salmonella arizonae (strain ATCC BAA-731 / CDC346-86 / RSK2980).